Consider the following 689-residue polypeptide: FACT complex subunit ssrp1-B (689 aa).

Disordered regions lie at residues D434 to T565 and K592 to D689. A compositionally biased stretch (acidic residues) spans E461–L477. 4 stretches are compositionally biased toward basic and acidic residues: residues D478–S491, I523–E532, E538–R563, and S601–K628. Residues P561–K627 constitute a DNA-binding region (HMG box). Residues G638–G650 are compositionally biased toward polar residues.

The protein belongs to the SSRP1 family. In terms of assembly, component of the FACT complex, a stable heterodimer of hmg-3 and spt-16. The FACT complex may also include hmg-4 instead of hmg-3. Expressed in the germline.

Its subcellular location is the nucleus. It is found in the chromosome. Its function is as follows. Component of the FACT complex, a general chromatin factor that acts to reorganize nucleosomes. The FACT complex is involved in multiple processes that require DNA as a template such as mRNA elongation, DNA replication and DNA repair. During transcription elongation the FACT complex acts as a histone chaperone that both destabilizes and restores nucleosomal structure. It facilitates the passage of RNA polymerase II and transcription by promoting the dissociation of one histone H2A-H2B dimer from the nucleosome, then subsequently promotes the reestablishment of the nucleosome following the passage of RNA polymerase II. Binds specifically to double-stranded DNA. In embryos, may function redundantly with hmg-4 to promote cell cycle progression and development of the anterior pharynx. In the germline, acts non-redundantly with hmg-4 to play a role in oocyte development. The polypeptide is FACT complex subunit ssrp1-B (Caenorhabditis elegans).